A 447-amino-acid polypeptide reads, in one-letter code: Probable glycine dehydrogenase (decarboxylating) subunit 1 (447 aa).

Belongs to the GcvP family. N-terminal subunit subfamily. In terms of assembly, the glycine cleavage system is composed of four proteins: P, T, L and H. In this organism, the P 'protein' is a heterodimer of two subunits.

It catalyses the reaction N(6)-[(R)-lipoyl]-L-lysyl-[glycine-cleavage complex H protein] + glycine + H(+) = N(6)-[(R)-S(8)-aminomethyldihydrolipoyl]-L-lysyl-[glycine-cleavage complex H protein] + CO2. The glycine cleavage system catalyzes the degradation of glycine. The P protein binds the alpha-amino group of glycine through its pyridoxal phosphate cofactor; CO(2) is released and the remaining methylamine moiety is then transferred to the lipoamide cofactor of the H protein. In Bacillus mycoides (strain KBAB4) (Bacillus weihenstephanensis), this protein is Probable glycine dehydrogenase (decarboxylating) subunit 1.